The sequence spans 62 residues: MTVALQSAVFASIAIPFIPVIGVPAVFASPDGWSSGKNVVFSGATPRIGPVPLVGILNSSVS.

The next 2 membrane-spanning stretches (helical) occupy residues 8–28 and 41–61; these read AVFASIAIPFIPVIGVPAVFA and FSGATPRIGPVPLVGILNSSV.

It belongs to the PsbZ family. PSII is composed of 1 copy each of membrane proteins PsbA, PsbB, PsbC, PsbD, PsbE, PsbF, PsbH, PsbI, PsbJ, PsbK, PsbL, PsbM, PsbT, PsbY, PsbZ, Psb30/Ycf12, at least 3 peripheral proteins of the oxygen-evolving complex and a large number of cofactors. It forms dimeric complexes.

The protein localises to the plastid. Its subcellular location is the chloroplast thylakoid membrane. Functionally, may control the interaction of photosystem II (PSII) cores with the light-harvesting antenna, regulates electron flow through the 2 photosystem reaction centers. PSII is a light-driven water plastoquinone oxidoreductase, using light energy to abstract electrons from H(2)O, generating a proton gradient subsequently used for ATP formation. The protein is Photosystem II reaction center protein Z of Selaginella uncinata (Blue spike-moss).